A 545-amino-acid chain; its full sequence is Chaperonin GroEL (545 aa).

Residues 29–32, 86–90, glycine 413, 478–480, and aspartate 494 contribute to the ATP site; these read TIGP, DGTTT, and NAA.

The protein belongs to the chaperonin (HSP60) family. As to quaternary structure, forms a cylinder of 14 subunits composed of two heptameric rings stacked back-to-back. Interacts with the co-chaperonin GroES.

The protein localises to the cytoplasm. It catalyses the reaction ATP + H2O + a folded polypeptide = ADP + phosphate + an unfolded polypeptide.. Functionally, together with its co-chaperonin GroES, plays an essential role in assisting protein folding. The GroEL-GroES system forms a nano-cage that allows encapsulation of the non-native substrate proteins and provides a physical environment optimized to promote and accelerate protein folding. This Exiguobacterium sibiricum (strain DSM 17290 / CCUG 55495 / CIP 109462 / JCM 13490 / 255-15) protein is Chaperonin GroEL.